The sequence spans 143 residues: Large ribosomal subunit protein uL15 (143 aa).

Residues 1-59 (MELNTITPGQGAKHAKRRVGRGIGSGLGKTAGRGHKGQKSRSGGYHKVGFEGGQMPMQR) are disordered. Gly residues predominate over residues 21–31 (RGIGSGLGKTA).

It belongs to the universal ribosomal protein uL15 family. Part of the 50S ribosomal subunit.

Binds to the 23S rRNA. This is Large ribosomal subunit protein uL15 from Polaromonas naphthalenivorans (strain CJ2).